The primary structure comprises 176 residues: 3-hydroxyacyl-[acyl-carrier-protein] dehydratase FabZ (176 aa).

The active site involves His-54.

It belongs to the thioester dehydratase family. FabZ subfamily.

Its subcellular location is the cytoplasm. It carries out the reaction a (3R)-hydroxyacyl-[ACP] = a (2E)-enoyl-[ACP] + H2O. Its function is as follows. Involved in unsaturated fatty acids biosynthesis. Catalyzes the dehydration of short chain beta-hydroxyacyl-ACPs and long chain saturated and unsaturated beta-hydroxyacyl-ACPs. The chain is 3-hydroxyacyl-[acyl-carrier-protein] dehydratase FabZ from Yersinia pseudotuberculosis serotype O:1b (strain IP 31758).